We begin with the raw amino-acid sequence, 540 residues long: Glucose-6-phosphate isomerase (540 aa).

Glu-350 acts as the Proton donor in catalysis. Active-site residues include His-381 and Lys-503.

The protein belongs to the GPI family.

It is found in the cytoplasm. It catalyses the reaction alpha-D-glucose 6-phosphate = beta-D-fructose 6-phosphate. It participates in carbohydrate biosynthesis; gluconeogenesis. It functions in the pathway carbohydrate degradation; glycolysis; D-glyceraldehyde 3-phosphate and glycerone phosphate from D-glucose: step 2/4. Catalyzes the reversible isomerization of glucose-6-phosphate to fructose-6-phosphate. This is Glucose-6-phosphate isomerase from Burkholderia orbicola (strain MC0-3).